The chain runs to 90 residues: Small ribosomal subunit protein uS15 (90 aa).

It belongs to the universal ribosomal protein uS15 family. Part of the 30S ribosomal subunit. Forms a bridge to the 50S subunit in the 70S ribosome, contacting the 23S rRNA.

Functionally, one of the primary rRNA binding proteins, it binds directly to 16S rRNA where it helps nucleate assembly of the platform of the 30S subunit by binding and bridging several RNA helices of the 16S rRNA. Its function is as follows. Forms an intersubunit bridge (bridge B4) with the 23S rRNA of the 50S subunit in the ribosome. In Helicobacter pylori (strain Shi470), this protein is Small ribosomal subunit protein uS15.